The sequence spans 186 residues: Tumor necrosis factor, alpha-induced protein 8-like protein 2 B (186 aa).

It belongs to the TNFAIP8 family. TNFAIP8L2 subfamily.

Its function is as follows. Acts as a negative regulator of innate and adaptive immunity by maintaining immune homeostasis. Negative regulator of Toll-like receptor and T-cell receptor function. Prevents hyperresponsiveness of the immune system and maintains immune homeostasis. Inhibits jun/ap1 and NF-kappa-B activation. Promotes Fas-induced apoptosis. This Danio rerio (Zebrafish) protein is Tumor necrosis factor, alpha-induced protein 8-like protein 2 B (tnfaip8l2b).